The chain runs to 75 residues: UPF0235 protein MSMEG_3845 (75 aa).

Belongs to the UPF0235 family.

In Mycolicibacterium smegmatis (strain ATCC 700084 / mc(2)155) (Mycobacterium smegmatis), this protein is UPF0235 protein MSMEG_3845.